The following is a 525-amino-acid chain: Protein shisa-6 (525 aa).

The N-terminal stretch at 1-30 (MALRRLLLPPLLLSLLLSLASLHLPPGADA) is a signal peptide. The Extracellular portion of the chain corresponds to 31 to 180 (ARGRSGNRTL…NKYDPEKDKT (150 aa)). N-linked (GlcNAc...) asparagine glycans are attached at residues asparagine 37 and asparagine 62. The chain crosses the membrane as a helical span at residues 181–201 (NFTVYITCGVIAFVIVAGVFA). The Cytoplasmic portion of the chain corresponds to 202 to 525 (KVSYDKAHRP…YTASKTEVTV (324 aa)). A disordered region spans residues 241 to 294 (ISAIDTSPKENTPVRSTSKNHYTPVRTAKQTPGDRQYNHPILSSATQTPTHEKP). Over residues 243–261 (AIDTSPKENTPVRSTSKNH) the composition is skewed to polar residues. Residues serine 416, serine 422, and serine 434 each carry the phosphoserine modification. Threonine 458 is modified (phosphothreonine). The disordered stretch occupies residues 469–495 (MHSHPSASNNSYATLGQSQTAAKRHAF). A compositionally biased stretch (polar residues) spans 473–489 (PSASNNSYATLGQSQTA). Threonine 502 carries the phosphothreonine modification. The PDZ-binding signature appears at 522-525 (EVTV).

Belongs to the shisa family. Component of the postsynaptic hippocampal AMPA-type glutamate receptor (AMPAR) complex, at least composed of pore forming AMPAR subunits GRIA1, GRIA2 and GRIA3 and AMPAR auxiliary proteins SHISA6 and SHISA7. Interacts (via PDZ-binding motif) with DLG4/PSD-95 (via PDZ domain); the interaction is direct. Post-translationally, N-glycosylated. Highly expressed in cerebellum and hippocampal neurons: CA1 stratum oriens and stratum radiatum, CA3 stratum oriens and stratum lucidum, and the dentate gyrus polymorphic layer. Expressed in other brain structures including olfactory bulb, cortex, amygdala and midbrain (at protein level). Also expressed in a subset of spermatogonial stem cells. Also expressed in eye, heart, kidney, lung, muscle and spleen. Isoform 2: Specifically expressed in hippocampus.

It localises to the postsynaptic density membrane. Involved in maintenance of high-frequency synaptic transmission at hippocampal CA3-CA1 synapses. Regulates AMPA-type glutamate receptor (AMPAR) immobilization at postsynaptic density keeping the channels in an activated state in the presence of glutamate and preventing synaptic depression. May play a role in self-renewal and differentiation of spermatogonial stem cells by inhibiting canonical Wnt signaling pathway. The chain is Protein shisa-6 from Mus musculus (Mouse).